Consider the following 703-residue polypeptide: Probable ATP-dependent RNA helicase vasa-like (703 aa).

Disordered stretches follow at residues 1–22, 35–73, and 88–167; these read MSDDWDETDAAPASDWNIESFG, NTGNAFNDGEGGFDEGSQSNFDDPFRSGGGGFGGRGRGG, and RDCP…RGCF. The segment covering 61–73 has biased composition (gly residues); the sequence is SGGGGFGGRGRGG. The segment at 77–92 adopts a CCHC-type 1 zinc-finger fold; the sequence is CFKCGDEGHMARDCPS. Over residues 146–155 the composition is skewed to gly residues; the sequence is FGFGSGSGSR. CCHC-type zinc fingers lie at residues 166–181 and 189–204; these read CFKCGEEGHMSRDCPS and CFKCGQEGHNARDCPN. The Q motif motif lies at 261–289; it reads ESFQSMNLRPLLLENIVKAGYGCPTPVQK. The Helicase ATP-binding domain maps to 292-475; sequence IPNVMNGRDI…SAFLNNYLFV (184 aa). Residue 305 to 312 coordinates ATP; that stretch reads AQTGSGKT. Residues 419 to 422 carry the DEAD box motif; that stretch reads DEAD. One can recognise a Helicase C-terminal domain in the interval 506-651; the sequence is MCEEILISAD…TIPDWLTQKA (146 aa). The disordered stretch occupies residues 676–703; the sequence is GGGRGWEKNQASSFLGGPSESNVDEEWD.

It belongs to the DEAD box helicase family. DDX4/VASA subfamily. Expressed in ovaries and testis. Not expressed in somatic tissue of the ovaries including follicle cells, muscle and connective tissue.

The protein localises to the cytoplasm. Its subcellular location is the nucleus. It localises to the nucleolus. It catalyses the reaction ATP + H2O = ADP + phosphate + H(+). Its function is as follows. Involved in translational control mechanisms operating in early stages of oogenesis. Required maternally in many stages of oogenesis, including cystocyte differentiation, oocyte differentiation, and specification of anterior-posterior polarity in the developing cysts. Essential for the formation and/or structural integrity of perinuclear nuage particles during germ cell formation. This is Probable ATP-dependent RNA helicase vasa-like from Penaeus vannamei (Whiteleg shrimp).